The chain runs to 1023 residues: Sodium/potassium-transporting ATPase subunit alpha-1 (1023 aa).

The propeptide occupies 1-5; that stretch reads MGKGV. Over residues 1-11 the composition is skewed to basic and acidic residues; it reads MGKGVGRDKYE. The disordered stretch occupies residues 1 to 38; it reads MGKGVGRDKYEPAAVSEHGDKKSKKAKKERDMDELKKE. The Cytoplasmic portion of the chain corresponds to 6–87; that stretch reads GRDKYEPAAV…NALTPPPTTP (82 aa). Lys9 bears the N6-acetyllysine mark. Tyr10 carries the phosphotyrosine modification. The residue at position 16 (Ser16) is a Phosphoserine; by PKC. Lys21 carries the N6-acetyllysine modification. Ser23 carries the post-translational modification Phosphoserine; by PKC. Positions 28-38 are enriched in basic and acidic residues; that stretch reads KERDMDELKKE. 2 positions are modified to phosphoserine: Ser40 and Ser47. Residues 82–84 form a phosphoinositide-3 kinase binding region; it reads PPP. A helical membrane pass occupies residues 88-108; sequence EWVKFCRQLFGGFSMLLWIGA. At 109–131 the chain is on the extracellular side; the sequence is ILCFLAYGIRSATEEEPPNDDLY. A helical transmembrane segment spans residues 132–152; that stretch reads LGVVLSAVVIITGCFSYYQEA. Topologically, residues 153–288 are cytoplasmic; that stretch reads KSSKIMESFK…GGQTPIAEEI (136 aa). The segment at 216–235 is disordered; sequence SSLTGESEPQTRSPDFTNEN. Position 228 is a phosphoserine (Ser228). Tyr260 is subject to Phosphotyrosine. The helical transmembrane segment at 289-308 threads the bilayer; the sequence is EHFIHLITGVAVFLGVSFFI. At 309–320 the chain is on the extracellular side; that stretch reads LSLILEYTWLEA. Residues 321 to 338 form a helical membrane-spanning segment; it reads VIFLIGIIVANVPEGLLA. At 339–772 the chain is on the cytoplasmic side; the sequence is TVTVCLTLTA…EEGRLIFDNL (434 aa). Residue Asp376 is the 4-aspartylphosphate intermediate of the active site. Phosphoserine is present on residues Ser452 and Ser484. An ATP-binding site is contributed by Lys487. At Tyr542 the chain carries Phosphotyrosine. Positions 596 to 717 are mediates interaction with SCN7A; it reads RAAVPDAVGK…QGAIVAVTGD (122 aa). Position 661 is an N6-succinyllysine (Lys661). 2 positions are modified to phosphoserine: Ser668 and Ser675. Mg(2+) is bound by residues Asp717 and Asp721. The chain crosses the membrane as a helical span at residues 773–792; that stretch reads KKSIAYTLTSNIPEITPFLI. The Extracellular segment spans residues 793-802; sequence FIIANIPLPL. A helical transmembrane segment spans residues 803 to 823; the sequence is GTVTILCIDLGTDMVPAISLA. Residues 824 to 843 are Cytoplasmic-facing; that stretch reads YEQAESDIMKRQPRNPKTDK. The helical transmembrane segment at 844 to 866 threads the bilayer; it reads LVNERLISMAYGQIGMIQALGGF. At 867 to 918 the chain is on the extracellular side; sequence FTYFVILAENGFLPFHLLGIRETWDDRWINDVEDSYGQQWTYEQRKIVEFTC. A helical transmembrane segment spans residues 919–938; it reads HTAFFVSIVVVQWADLVICK. At 939–951 the chain is on the cytoplasmic side; the sequence is TRRNSVFQQGMKN. Ser943 carries the post-translational modification Phosphoserine; by PKA. Residues 952–970 form a helical membrane-spanning segment; that stretch reads KILIFGLFEETALAAFLSY. Topologically, residues 971 to 985 are extracellular; sequence CPGMGAALRMYPLKP. A helical membrane pass occupies residues 986–1006; sequence TWWFCAFPYSLLIFVYDEVRK. At 1007–1023 the chain is on the cytoplasmic side; it reads LIIRRRPGGWVEKETYY.

The protein belongs to the cation transport ATPase (P-type) (TC 3.A.3) family. Type IIC subfamily. As to quaternary structure, the sodium/potassium-transporting ATPase is composed of a catalytic alpha subunit, an auxiliary non-catalytic beta subunit and an additional regulatory subunit. Interacts with regulatory subunit FXYD1. Interacts with regulatory subunit FXYD3. Interacts with SLC35G1 and STIM1. Interacts with SIK1. Interacts with CLN3; this interaction regulates the sodium/potassium-transporting ATPase complex localization at the plasma membrane. Interacts with SCN7A; activates ATP1A1 P-type sodium:potassium-exchanging transporter activity which indirectly signals to nearby neurons to regulate sodium homeostasis. In terms of processing, phosphorylation on Tyr-10 modulates pumping activity. Phosphorylation of Ser-943 by PKA modulates the response of ATP1A1 to PKC. Dephosphorylation by protein phosphatase 2A (PP2A) following increases in intracellular sodium, leading to increase catalytic activity. In terms of tissue distribution, expressed in the central nervous system, in most motor and sensory axons of the ventral and dorsal roots, as well as in the large motor neurons of the ventral horn (at protein level).

Its subcellular location is the cell membrane. It is found in the basolateral cell membrane. The protein resides in the sarcolemma. It localises to the cell projection. The protein localises to the axon. Its subcellular location is the melanosome. The enzyme catalyses K(+)(out) + Na(+)(in) + ATP + H2O = K(+)(in) + Na(+)(out) + ADP + phosphate + H(+). This is the catalytic component of the active enzyme, which catalyzes the hydrolysis of ATP coupled with the exchange of sodium and potassium ions across the plasma membrane. This action creates the electrochemical gradient of sodium and potassium ions, providing the energy for active transport of various nutrients. Could also be part of an osmosensory signaling pathway that senses body-fluid sodium levels and controls salt intake behavior as well as voluntary water intake to regulate sodium homeostasis. The sequence is that of Sodium/potassium-transporting ATPase subunit alpha-1 (Atp1a1) from Rattus norvegicus (Rat).